The chain runs to 392 residues: Basic salivary proline-rich protein 1 (392 aa).

A signal peptide spans 1–16 (MLLILLSVALLALSSA). Gln17 is modified (pyrrolidone carboxylic acid). The segment covering 19 to 28 (LNEDVSQEES) has biased composition (polar residues). Positions 19-392 (LNEDVSQEES…QGGRPSRPPQ (374 aa)) are disordered. Residues 34 to 47 (GNPQGPSPQGGNKP) show a composition bias toward low complexity. The residue at position 40 (Ser40) is a Phosphoserine; alternate. Residue Ser40 is glycosylated (O-linked (Hex) serine; alternate). Over residues 48–83 (QGPPPPPGKPQGPPPQGGNKPQGPPPPGKPQGPPPQ) the composition is skewed to pro residues. 15 consecutive repeat copies span residues 53-72 (PPGK…QGPP), 73-92 (PPGK…SPRS), 93-112 (PPGK…QGPP), 114-133 (PPGK…QGPP), 134-153 (PPGK…SPRS), 154-173 (PPGK…QGPP), 175-194 (PPGK…QGPP), 195-214 (PPGK…SPRS), 215-234 (PPGK…QGPP), 236-255 (PPGK…QGPP), 256-275 (PPGK…SPQS), 276-295 (PPGK…QGPP), 297-316 (PPGK…QGPP), 317-336 (PPGK…QSAR), and 338-357 (PPGK…QGPP). The 15 X 20 AA approximate tandem repeats of P-P-G-K-P-Q-G-P-P-[PAQ]-Q-[GE]-[GD]-[NKS]-[KSQRN]-[PRQS]-[QS] [GPS]-[PQAR]-[PSR] stretch occupies residues 53 to 357 (PPGKPQGPPP…QEGNNPQGPP (305 aa)). A glycan (O-linked (HexNAc...) serine) is linked at Ser87. A compositionally biased stretch (pro residues) spans 91–144 (RSPPGKPQGPPPQGGNQPQGPPPPPGKPQGPPPQGGNKPQGPPPPGKPQGPPPQ). A Phosphoserine modification is found at Ser92. Ser150 is subject to Phosphoserine; alternate. O-linked (Hex) serine; alternate glycosylation is present at Ser150. Composition is skewed to pro residues over residues 152-205 (RSPP…PPPQ), 213-243 (RSPP…PQGP), 252-266 (QGPP…PPPQ), and 274-324 (QSPP…PQGP). The segment covering 325–334 (PAQGGSKSQS) has biased composition (low complexity). The O-linked (HexNAc...) serine glycan is linked to Ser330. Pro residues predominate over residues 354–392 (QGPPPPAGGNPQQPQAPPAGQPQGPPRPPQGGRPSRPPQ).

Post-translationally, O-glycosylated. O-glycosylation on Ser-87 is prevalent in head and neck cancer patients. O-Glycosylation on Ser-330 has a 5 times prevalence in head and neck cancers. Proteolytically cleaved at the tripeptide Xaa-Pro-Gln, where Xaa in the P(3) position is mostly lysine. The endoprotease may be of microbial origin. In terms of processing, pyroglutamate formation occurs on terminal Gln residues of cleaved peptides. Besides on the N-terminal of mature PBR1, pyroglutamate formation found on at least Gln-58.

The protein resides in the secreted. The protein is Basic salivary proline-rich protein 1 (PRB1) of Homo sapiens (Human).